We begin with the raw amino-acid sequence, 257 residues long: Mitochondrial distribution and morphology protein 12 (257 aa).

The region spanning 1 to 256 (MSFEINWEKL…WPSWVNLDFN (256 aa)) is the SMP-LTD domain. Residues 74–98 (YEEDNETSSEMHGRDGQNVGESGEE) form a disordered region.

Belongs to the MDM12 family. In terms of assembly, component of the ER-mitochondria encounter structure (ERMES) or MDM complex, composed of MMM1, MDM10, MDM12 and MDM34. An MMM1 homodimer associates with one molecule of MDM12 on each side in a pairwise head-to-tail manner, and the SMP-LTD domains of MMM1 and MDM12 generate a continuous hydrophobic tunnel for phospholipid trafficking.

It localises to the mitochondrion outer membrane. Its subcellular location is the endoplasmic reticulum membrane. Component of the ERMES/MDM complex, which serves as a molecular tether to connect the endoplasmic reticulum (ER) and mitochondria. Components of this complex are involved in the control of mitochondrial shape and protein biogenesis, and function in nonvesicular lipid trafficking between the ER and mitochondria. MDM12 is required for the interaction of the ER-resident membrane protein MMM1 and the outer mitochondrial membrane-resident beta-barrel protein MDM10. The MDM12-MMM1 subcomplex functions in the major beta-barrel assembly pathway that is responsible for biogenesis of all mitochondrial outer membrane beta-barrel proteins, and acts in a late step after the SAM complex. The MDM10-MDM12-MMM1 subcomplex further acts in the TOM40-specific pathway after the action of the MDM12-MMM1 complex. Essential for establishing and maintaining the structure of mitochondria and maintenance of mtDNA nucleoids. In Candida glabrata (strain ATCC 2001 / BCRC 20586 / JCM 3761 / NBRC 0622 / NRRL Y-65 / CBS 138) (Yeast), this protein is Mitochondrial distribution and morphology protein 12.